Reading from the N-terminus, the 290-residue chain is 4-diphosphocytidyl-2-C-methyl-D-erythritol kinase (290 aa).

Residue K8 is part of the active site. Position 92-102 (92-102) interacts with ATP; the sequence is PISAGLAGGST. The active site involves D134.

The protein belongs to the GHMP kinase family. IspE subfamily.

The catalysed reaction is 4-CDP-2-C-methyl-D-erythritol + ATP = 4-CDP-2-C-methyl-D-erythritol 2-phosphate + ADP + H(+). It functions in the pathway isoprenoid biosynthesis; isopentenyl diphosphate biosynthesis via DXP pathway; isopentenyl diphosphate from 1-deoxy-D-xylulose 5-phosphate: step 3/6. In terms of biological role, catalyzes the phosphorylation of the position 2 hydroxy group of 4-diphosphocytidyl-2C-methyl-D-erythritol. This chain is 4-diphosphocytidyl-2-C-methyl-D-erythritol kinase, found in Caldicellulosiruptor saccharolyticus (strain ATCC 43494 / DSM 8903 / Tp8T 6331).